The chain runs to 102 residues: NADH-quinone oxidoreductase subunit K (102 aa).

3 consecutive transmembrane segments (helical) span residues 6-26, 30-50, and 62-82; these read MEHG…GLMV, ILFI…AFVV, and VMFI…LAIL.

The protein belongs to the complex I subunit 4L family. In terms of assembly, NDH-1 is composed of 13 different subunits. Subunits NuoA, H, J, K, L, M, N constitute the membrane sector of the complex.

The protein resides in the cell inner membrane. It carries out the reaction a quinone + NADH + 5 H(+)(in) = a quinol + NAD(+) + 4 H(+)(out). Functionally, NDH-1 shuttles electrons from NADH, via FMN and iron-sulfur (Fe-S) centers, to quinones in the respiratory chain. The immediate electron acceptor for the enzyme in this species is believed to be ubiquinone. Couples the redox reaction to proton translocation (for every two electrons transferred, four hydrogen ions are translocated across the cytoplasmic membrane), and thus conserves the redox energy in a proton gradient. This is NADH-quinone oxidoreductase subunit K from Ectopseudomonas mendocina (strain ymp) (Pseudomonas mendocina).